The sequence spans 154 residues: Ribonuclease HI (154 aa).

Residues 1-142 form the RNase H type-1 domain; the sequence is MQKQIEIFTD…CDQLAKAGAE (142 aa). Mg(2+) is bound by residues aspartate 10, glutamate 48, aspartate 70, and aspartate 134.

The protein belongs to the RNase H family. As to quaternary structure, monomer. The cofactor is Mg(2+).

It is found in the cytoplasm. It carries out the reaction Endonucleolytic cleavage to 5'-phosphomonoester.. Its function is as follows. Endonuclease that specifically degrades the RNA of RNA-DNA hybrids. The protein is Ribonuclease HI (rnhA) of Pasteurella multocida (strain Pm70).